The primary structure comprises 253 residues: Blue-light photoreceptor (253 aa).

The PAS domain maps to Gln-6–Lys-79. At Cys-56 the chain carries S-4a-FMN cysteine. Residues Ser-80–Lys-133 form the PAC domain. An STAS domain is found at Ser-142 to Tyr-253.

FMN binds covalently to cysteine after exposure to blue light and this bond is spontaneously broken in the dark.

Its function is as follows. Exhibits the same spectroscopical features and blue-light induced photochemistry as plants phototropins, with the reversible formation of a blue-shifted photoproduct, assigned to an FMN-cysteine thiol adduct. Positive regulator in the activation of the general stress transcription factor sigma-B. This chain is Blue-light photoreceptor, found in Listeria monocytogenes serovar 1/2a (strain ATCC BAA-679 / EGD-e).